A 130-amino-acid chain; its full sequence is Methylglyoxal synthase (130 aa).

One can recognise an MGS-like domain in the interval 1 to 130 (MSKPRIALIA…DLARNMQDVC (130 aa)). Residues His-11, Lys-15, 37 to 40 (TGTT), and 57 to 58 (SG) contribute to the substrate site. Asp-63 (proton donor/acceptor) is an active-site residue. His-90 is a binding site for substrate.

This sequence belongs to the methylglyoxal synthase family.

It carries out the reaction dihydroxyacetone phosphate = methylglyoxal + phosphate. Catalyzes the formation of methylglyoxal from dihydroxyacetone phosphate. This chain is Methylglyoxal synthase, found in Burkholderia lata (strain ATCC 17760 / DSM 23089 / LMG 22485 / NCIMB 9086 / R18194 / 383).